Here is a 263-residue protein sequence, read N- to C-terminus: Phosphoinositide-3-kinase-interacting protein 1 (263 aa).

The N-terminal stretch at 1–21 (MLLAWVQAFLVSNMLLAEAYG) is a signal peptide. Residues 22 to 168 (SGGCFWDNGH…NSKEKKDLGT (147 aa)) lie on the Extracellular side of the membrane. The 78-residue stretch at 24 to 101 (GCFWDNGHLY…EKRPCEDLRC (78 aa)) folds into the Kringle domain. 3 disulfides stabilise this stretch: Cys25–Cys101, Cys46–Cys82, and Cys70–Cys96. Ser39 is a glycosylation site (O-linked (GalNAc...) serine). The N-linked (GlcNAc...) (complex) asparagine glycan is linked to Asn66. The helical transmembrane segment at 169–189 (LGYVLGITMMVIIIAIGAGII) threads the bilayer. Residues 190–263 (LGYSYKRGKD…LMGQAGTPGA (74 aa)) lie on the Cytoplasmic side of the membrane. Polar residues predominate over residues 242 to 251 (QTPVDPQEGT). The segment at 242–263 (QTPVDPQEGTTPLMGQAGTPGA) is disordered.

In terms of processing, N- and O-glycosylated. O-glycosylated with core 1 or possibly core 8 glycans. N-glycan heterogeneity at Asn-66: dHex1Hex5HexNAc4 (major) and dHex1Hex6HexNAc5 (minor).

It is found in the cell membrane. In terms of biological role, negative regulator of hepatic phosphatidylinositol 3-kinase (PI3K) activity. The protein is Phosphoinositide-3-kinase-interacting protein 1 (PIK3IP1) of Homo sapiens (Human).